The primary structure comprises 125 residues: UPF0231 protein HD_1708 (125 aa).

This sequence belongs to the UPF0231 family.

This is UPF0231 protein HD_1708 from Haemophilus ducreyi (strain 35000HP / ATCC 700724).